We begin with the raw amino-acid sequence, 470 residues long: PTS system trehalose-specific EIIBC component (470 aa).

One can recognise a PTS EIIB type-1 domain in the interval 1–88; that stretch reads MGELNKSARQ…VKETGIGEST (88 aa). Cys-27 acts as the Phosphocysteine intermediate; for EIIB activity in catalysis. Cys-27 is subject to Phosphocysteine; by EIIA. One can recognise a PTS EIIC type-1 domain in the interval 108–470; it reads KTLADIFIPI…TYAYARFKHK (363 aa). Transmembrane regions (helical) follow at residues 110–130, 160–180, 183–203, 234–254, 263–283, 301–321, 326–346, 347–367, 403–423, and 443–463; these read LADI…LMGI, INLI…WSAV, FGGN…PDLL, GQVL…VFLT, LLVV…IIIG, FGSF…ALVI, HTFL…TFLW, PMLA…MFIV, FIIA…QGVL, and WGAF…GTYA.

It is found in the cell membrane. The catalysed reaction is alpha,alpha-trehalose(out) + N(pros)-phospho-L-histidyl-[protein] = alpha,alpha-trehalose 6-phosphate(in) + L-histidyl-[protein]. Functionally, the phosphoenolpyruvate-dependent sugar phosphotransferase system (sugar PTS), a major carbohydrate active transport system, catalyzes the phosphorylation of incoming sugar substrates concomitantly with their translocation across the cell membrane. This system is involved in trehalose transport. The polypeptide is PTS system trehalose-specific EIIBC component (treP) (Bacillus subtilis (strain 168)).